A 201-amino-acid chain; its full sequence is uncharacterized protein (201 aa).

Residues 1–23 (MKILYFIFVIIINILLILNHVKS) form the signal peptide. Residues 24-178 (KYNTFIFENT…GNYGEDPQRN (155 aa)) are Extracellular-facing. 2 N-linked (GlcNAc...) asparagine glycosylation sites follow: asparagine 114 and asparagine 134. Residues 122–157 (TPETPSPTENAPNTSGGSSEGNHYTYKSSSSSSEHI) are disordered. Positions 123 to 148 (PETPSPTENAPNTSGGSSEGNHYTYK) are enriched in polar residues. Residues 179–199 (IGISLSSSLIFISILFLIIFI) form a helical membrane-spanning segment. Topologically, residues 200 to 201 (NN) are cytoplasmic.

It localises to the membrane. This is an uncharacterized protein from Dictyostelium discoideum (Social amoeba).